We begin with the raw amino-acid sequence, 102 residues long: NADH-quinone oxidoreductase subunit K (102 aa).

The next 3 helical transmembrane spans lie at M6–I26, L30–V50, and I65–L85.

This sequence belongs to the complex I subunit 4L family. As to quaternary structure, NDH-1 is composed of 13 different subunits. Subunits NuoA, H, J, K, L, M, N constitute the membrane sector of the complex.

It is found in the cell inner membrane. It carries out the reaction a quinone + NADH + 5 H(+)(in) = a quinol + NAD(+) + 4 H(+)(out). Its function is as follows. NDH-1 shuttles electrons from NADH, via FMN and iron-sulfur (Fe-S) centers, to quinones in the respiratory chain. The immediate electron acceptor for the enzyme in this species is believed to be ubiquinone. Couples the redox reaction to proton translocation (for every two electrons transferred, four hydrogen ions are translocated across the cytoplasmic membrane), and thus conserves the redox energy in a proton gradient. The sequence is that of NADH-quinone oxidoreductase subunit K from Shewanella oneidensis (strain ATCC 700550 / JCM 31522 / CIP 106686 / LMG 19005 / NCIMB 14063 / MR-1).